The following is a 308-amino-acid chain: Ribosomal RNA large subunit methyltransferase F (308 aa).

This sequence belongs to the methyltransferase superfamily. METTL16/RlmF family.

Its subcellular location is the cytoplasm. The enzyme catalyses adenosine(1618) in 23S rRNA + S-adenosyl-L-methionine = N(6)-methyladenosine(1618) in 23S rRNA + S-adenosyl-L-homocysteine + H(+). Functionally, specifically methylates the adenine in position 1618 of 23S rRNA. This is Ribosomal RNA large subunit methyltransferase F from Shigella flexneri serotype 5b (strain 8401).